A 123-amino-acid polypeptide reads, in one-letter code: Large ribosomal subunit protein bL12 (123 aa).

This sequence belongs to the bacterial ribosomal protein bL12 family. As to quaternary structure, homodimer. Part of the ribosomal stalk of the 50S ribosomal subunit. Forms a multimeric L10(L12)X complex, where L10 forms an elongated spine to which 2 to 4 L12 dimers bind in a sequential fashion. Binds GTP-bound translation factors.

Its function is as follows. Forms part of the ribosomal stalk which helps the ribosome interact with GTP-bound translation factors. Is thus essential for accurate translation. The chain is Large ribosomal subunit protein bL12 from Geobacillus kaustophilus (strain HTA426).